Consider the following 210-residue polypeptide: Heart- and neural crest derivatives-expressed protein 2 (210 aa).

Positions 81–101 (SGAGGLMQRPVKRRGTANRKE) are disordered. Residues 90–101 (PVKRRGTANRKE) are compositionally biased toward basic residues. Positions 92 to 144 (KRRGTANRKERRRTISINSAFAELRECIPNVPADTKLSKIKTLRLATSYIAYL) constitute a bHLH domain.

In terms of assembly, efficient DNA binding requires dimerization with another bHLH protein. As to expression, heart, liver and spleen.

Its subcellular location is the nucleus. Functionally, essential for cardiac morphogenesis and for the development of branchial arches. Binds DNA on E-box consensus sequence 5'-CANNTG-3'. This Xenopus laevis (African clawed frog) protein is Heart- and neural crest derivatives-expressed protein 2 (hand2).